Reading from the N-terminus, the 338-residue chain is Microtubule-associated protein RP/EB family member 2 (338 aa).

Positions 1–21 are disordered; that stretch reads MPGPTQALSPNGENNNDIIQD. Residues 57-159 form the Calponin-homology (CH) domain; sequence TMSRHDIIAW…FIQWFKKFFD (103 aa). 2 disordered regions span residues 171–241 and 300–338; these read EARQ…KDLE and SEEHESHTEEHEGEEQVHEQPSSRRSTDSRSVSDNFHFV. Positions 200–234 are enriched in low complexity; the sequence is SPTAGAAKSSPASKPGSTPSRPSSAKKAAPSSSAS. One can recognise an EB1 C-terminal domain in the interval 236 to 306; the sequence is SDKDLETQVI…LYASEEHESH (71 aa). Residues 300 to 327 are compositionally biased toward basic and acidic residues; sequence SEEHESHTEEHEGEEQVHEQPSSRRSTD. The segment covering 328–338 has biased composition (low complexity); sequence SRSVSDNFHFV.

Belongs to the MAPRE family.

It is found in the cytoplasm. It localises to the cytoskeleton. Its function is as follows. May be involved in microtubule polymerization, and spindle function by stabilizing microtubules and anchoring them at centrosomes. This is Microtubule-associated protein RP/EB family member 2 (MAPRE2) from Gallus gallus (Chicken).